We begin with the raw amino-acid sequence, 368 residues long: Cell division protein FtsZ 1 (368 aa).

Residues Gly-52–Asn-56, Gly-139–Gly-141, Glu-170, Arg-174, and Asp-217 contribute to the GTP site.

This sequence belongs to the FtsZ family. In terms of assembly, homodimer. Polymerizes to form a dynamic ring structure in a strictly GTP-dependent manner. Interacts directly with several other division proteins.

It is found in the cytoplasm. Its function is as follows. Essential cell division protein that forms a contractile ring structure (Z ring) at the future cell division site. The regulation of the ring assembly controls the timing and the location of cell division. One of the functions of the FtsZ ring is to recruit other cell division proteins to the septum to produce a new cell wall between the dividing cells. Binds GTP and shows GTPase activity. This is Cell division protein FtsZ 1 from Archaeoglobus fulgidus (strain ATCC 49558 / DSM 4304 / JCM 9628 / NBRC 100126 / VC-16).